The following is a 396-amino-acid chain: Na(+)/H(+) antiporter NhaA 1 (396 aa).

A run of 12 helical transmembrane segments spans residues 9–29 (LHNE…AMLI), 59–79 (LLLW…GLEL), 95–115 (VLPV…YVMF), 125–145 (GWAV…ALLG), 154–174 (LFLL…IAIF), 177–197 (SDLS…LFLL), 200–220 (IGVK…VAVL), 223–243 (GVHA…KGET), 260–280 (VVGL…SLAG), 281–301 (LGLN…LLLG), 332–352 (GVAL…SLAF), and 373–393 (ILSG…FSLA).

The protein belongs to the NhaA Na(+)/H(+) (TC 2.A.33) antiporter family.

It localises to the cell inner membrane. The enzyme catalyses Na(+)(in) + 2 H(+)(out) = Na(+)(out) + 2 H(+)(in). Its function is as follows. Na(+)/H(+) antiporter that extrudes sodium in exchange for external protons. The polypeptide is Na(+)/H(+) antiporter NhaA 1 (Magnetococcus marinus (strain ATCC BAA-1437 / JCM 17883 / MC-1)).